Here is a 95-residue protein sequence, read N- to C-terminus: Aspartyl/glutamyl-tRNA(Asn/Gln) amidotransferase subunit C (95 aa).

This sequence belongs to the GatC family. As to quaternary structure, heterotrimer of A, B and C subunits.

The catalysed reaction is L-glutamyl-tRNA(Gln) + L-glutamine + ATP + H2O = L-glutaminyl-tRNA(Gln) + L-glutamate + ADP + phosphate + H(+). The enzyme catalyses L-aspartyl-tRNA(Asn) + L-glutamine + ATP + H2O = L-asparaginyl-tRNA(Asn) + L-glutamate + ADP + phosphate + 2 H(+). Allows the formation of correctly charged Asn-tRNA(Asn) or Gln-tRNA(Gln) through the transamidation of misacylated Asp-tRNA(Asn) or Glu-tRNA(Gln) in organisms which lack either or both of asparaginyl-tRNA or glutaminyl-tRNA synthetases. The reaction takes place in the presence of glutamine and ATP through an activated phospho-Asp-tRNA(Asn) or phospho-Glu-tRNA(Gln). This chain is Aspartyl/glutamyl-tRNA(Asn/Gln) amidotransferase subunit C, found in Geobacter sp. (strain M21).